We begin with the raw amino-acid sequence, 448 residues long: Fibulin-5 (448 aa).

The N-terminal stretch at 1-23 (MPGLKRILTVTILALWLPHPGNA) is a signal peptide. The EGF-like 1; calcium-binding domain occupies 42-82 (DIDECRTIPEACRGDMMCVNQNGGYLCIPRTNPVYRGPYSN). 17 disulfide bridges follow: Cys46–Cys59, Cys53–Cys68, Cys131–Cys144, Cys138–Cys153, Cys155–Cys166, Cys172–Cys181, Cys177–Cys190, Cys192–Cys205, Cys211–Cys221, Cys217–Cys230, Cys232–Cys245, Cys251–Cys262, Cys258–Cys271, Cys273–Cys286, Cys292–Cys305, Cys299–Cys314, and Cys320–Cys332. Positions 54–56 (RGD) match the Cell attachment site motif. The EGF-like 2; calcium-binding domain maps to 127 to 167 (DVDECATDSHQCNPTQICINTEGGYTCSCTDGYWLLEGQCL). The EGF-like 3; calcium-binding domain maps to 168–206 (DIDECRYGYCQQLCANVPGSYSCTCNPGFTLNDDGRSCQ). The EGF-like 4; calcium-binding domain occupies 207 to 246 (DVNECETENPCVQTCVNTYGSFICRCDPGYELEEDGIHCS). The interaction with LOXL1 stretch occupies residues 245–448 (CSDMDECSFS…LRIYVSQYPF (204 aa)). The EGF-like 5; calcium-binding domain occupies 247–287 (DMDECSFSEFLCQHECVNQPGSYFCSCPPGYVLLEDNRSCQ). N-linked (GlcNAc...) asparagine glycans are attached at residues Asn283 and Asn296. The EGF-like 6; calcium-binding domain occupies 288–333 (DINECEHRNHTCTPLQTCYNLQGGFKCIDPIVCEEPYLLIGDNRCM).

This sequence belongs to the fibulin family. As to quaternary structure, homodimer. Monomer, homodimerizes in presence of Ca(2+). Interacts with ELN. Interacts (via N-terminus) with the integrins ITGAV/ITGB3, ITGAV/ITGB5 and ITGA9/ITGB1. Interacts with FBN1 (via N-terminal domain). Forms a ternary complex with ELN and FBN1. Interacts with EFEMP2 with moderate affinity. Interacts with LOXL1. In terms of processing, N-glycosylated.

Its subcellular location is the secreted. It is found in the extracellular space. It localises to the extracellular matrix. Essential for elastic fiber formation, is involved in the assembly of continuous elastin (ELN) polymer and promotes the interaction of microfibrils and ELN. Stabilizes and organizes elastic fibers in the skin, lung and vasculature. Promotes adhesion of endothelial cells through interaction of integrins and the RGD motif. Vascular ligand for integrin receptors which may play a role in vascular development and remodeling. May act as an adapter that mediates the interaction between FBN1 and ELN. The protein is Fibulin-5 (Fbln5) of Rattus norvegicus (Rat).